Reading from the N-terminus, the 73-residue chain is Translation initiation factor IF-1 1 (73 aa).

Residues 1 to 72 (MAKEELIEFG…TKGRINFRHK (72 aa)) form the S1-like domain.

It belongs to the IF-1 family. As to quaternary structure, component of the 30S ribosomal translation pre-initiation complex which assembles on the 30S ribosome in the order IF-2 and IF-3, IF-1 and N-formylmethionyl-tRNA(fMet); mRNA recruitment can occur at any time during PIC assembly.

The protein localises to the cytoplasm. In terms of biological role, one of the essential components for the initiation of protein synthesis. Stabilizes the binding of IF-2 and IF-3 on the 30S subunit to which N-formylmethionyl-tRNA(fMet) subsequently binds. Helps modulate mRNA selection, yielding the 30S pre-initiation complex (PIC). Upon addition of the 50S ribosomal subunit IF-1, IF-2 and IF-3 are released leaving the mature 70S translation initiation complex. In Cupriavidus pinatubonensis (strain JMP 134 / LMG 1197) (Cupriavidus necator (strain JMP 134)), this protein is Translation initiation factor IF-1 1.